The sequence spans 492 residues: Probable cytosol aminopeptidase (492 aa).

Residues Lys248 and Asp253 each coordinate Mn(2+). Lys260 is an active-site residue. Asp271, Asp330, and Glu332 together coordinate Mn(2+). Arg334 is an active-site residue.

This sequence belongs to the peptidase M17 family. Requires Mn(2+) as cofactor.

The protein localises to the cytoplasm. The enzyme catalyses Release of an N-terminal amino acid, Xaa-|-Yaa-, in which Xaa is preferably Leu, but may be other amino acids including Pro although not Arg or Lys, and Yaa may be Pro. Amino acid amides and methyl esters are also readily hydrolyzed, but rates on arylamides are exceedingly low.. It catalyses the reaction Release of an N-terminal amino acid, preferentially leucine, but not glutamic or aspartic acids.. Its function is as follows. Presumably involved in the processing and regular turnover of intracellular proteins. Catalyzes the removal of unsubstituted N-terminal amino acids from various peptides. This Aeropyrum pernix (strain ATCC 700893 / DSM 11879 / JCM 9820 / NBRC 100138 / K1) protein is Probable cytosol aminopeptidase (pepA).